Reading from the N-terminus, the 130-residue chain is ATP synthase epsilon chain (130 aa).

Belongs to the ATPase epsilon chain family. As to quaternary structure, F-type ATPases have 2 components, CF(1) - the catalytic core - and CF(0) - the membrane proton channel. CF(1) has five subunits: alpha(3), beta(3), gamma(1), delta(1), epsilon(1). CF(0) has three main subunits: a, b and c.

It is found in the cell inner membrane. Functionally, produces ATP from ADP in the presence of a proton gradient across the membrane. This is ATP synthase epsilon chain from Campylobacter hominis (strain ATCC BAA-381 / DSM 21671 / CCUG 45161 / LMG 19568 / NCTC 13146 / CH001A).